Here is a 236-residue protein sequence, read N- to C-terminus: MSPDLDTPLIIALDYPRLDQALAMAERLDPSRCRVKVGKELFTRTGPRVLEALHGLGFEVFLDLKFHDIPNTVAGAVEAAADHGVWMVNVHAGGGRRMMEAARERLERRRLGTHLIAVTVLTSMERDDLIEVGVEAEPLSQVERLARLAQQSGMAGVVCSAQEAAALRATCGDDFLKVTPGIRPRASSADDQRRTLTPGEAMAAGSTHLVVGRPVTQAPDPMAALATIERELAEPS.

Residues Asp-14, Lys-36, 63-72 (DLKFHDIPNT), Thr-122, Arg-183, Gln-192, Gly-212, and Arg-213 contribute to the substrate site. The active-site Proton donor is Lys-65.

It belongs to the OMP decarboxylase family. Type 1 subfamily. Homodimer.

The enzyme catalyses orotidine 5'-phosphate + H(+) = UMP + CO2. The protein operates within pyrimidine metabolism; UMP biosynthesis via de novo pathway; UMP from orotate: step 2/2. Catalyzes the decarboxylation of orotidine 5'-monophosphate (OMP) to uridine 5'-monophosphate (UMP). The polypeptide is Orotidine 5'-phosphate decarboxylase (Chromohalobacter salexigens (strain ATCC BAA-138 / DSM 3043 / CIP 106854 / NCIMB 13768 / 1H11)).